The following is a 175-amino-acid chain: Large ribosomal subunit protein uL10 (175 aa).

It belongs to the universal ribosomal protein uL10 family. In terms of assembly, part of the ribosomal stalk of the 50S ribosomal subunit. The N-terminus interacts with L11 and the large rRNA to form the base of the stalk. The C-terminus forms an elongated spine to which L12 dimers bind in a sequential fashion forming a multimeric L10(L12)X complex.

Its function is as follows. Forms part of the ribosomal stalk, playing a central role in the interaction of the ribosome with GTP-bound translation factors. In Mycolicibacterium smegmatis (strain ATCC 700084 / mc(2)155) (Mycobacterium smegmatis), this protein is Large ribosomal subunit protein uL10.